The following is a 152-amino-acid chain: Nucleoside diphosphate kinase B (152 aa).

The interaction with AKAP13 stretch occupies residues 1 to 66 (MAHQERTFIA…DRPFYPGLVK (66 aa)). Lys-12, Phe-60, Arg-88, Thr-94, Arg-105, and Asn-115 together coordinate ATP. The Pros-phosphohistidine intermediate role is filled by His-118.

This sequence belongs to the NDK family. In terms of assembly, hexamer of two different chains: An and B (A6, A5B, A4B2, A3B3, A2B4, AB5, B6). Interacts with CAPN8. Interacts with AKAP13. Interacts with ITGB1BP1 (via C-terminal domain region). Interacts with BCL2L10. Mg(2+) is required as a cofactor. Ubiquitous.

It is found in the cytoplasm. It localises to the cell projection. The protein localises to the lamellipodium. The protein resides in the ruffle. Its subcellular location is the nucleus. It catalyses the reaction a 2'-deoxyribonucleoside 5'-diphosphate + ATP = a 2'-deoxyribonucleoside 5'-triphosphate + ADP. It carries out the reaction a ribonucleoside 5'-diphosphate + ATP = a ribonucleoside 5'-triphosphate + ADP. The enzyme catalyses ATP + protein L-histidine = ADP + protein N-phospho-L-histidine.. Functionally, major role in the synthesis of nucleoside triphosphates other than ATP. The ATP gamma phosphate is transferred to the NDP beta phosphate via a ping-pong mechanism, using a phosphorylated active-site intermediate. Negatively regulates Rho activity by interacting with AKAP13/LBC. Acts as a transcriptional activator of the MYC gene; binds DNA non-specifically. Binds to both single-stranded guanine- and cytosine-rich strands within the nuclease hypersensitive element (NHE) III(1) region of the MYC gene promoter. Does not bind to duplex NHE III(1). Has G-quadruplex (G4) DNA-binding activity, which is independent of its nucleotide-binding and kinase activity. Binds both folded and unfolded G4 with similar low nanomolar affinities. Stabilizes folded G4s regardless of whether they are prefolded or not. Exhibits histidine protein kinase activity. The polypeptide is Nucleoside diphosphate kinase B (NME2) (Canis lupus familiaris (Dog)).